The primary structure comprises 338 residues: 4-hydroxythreonine-4-phosphate dehydrogenase (338 aa).

Positions 139 and 140 each coordinate substrate. A divalent metal cation contacts are provided by His169, His214, and His270. Substrate contacts are provided by Lys278, Asn287, and Arg296.

Belongs to the PdxA family. In terms of assembly, homodimer. It depends on Zn(2+) as a cofactor. Requires Mg(2+) as cofactor. Co(2+) is required as a cofactor.

The protein resides in the cytoplasm. The catalysed reaction is 4-(phosphooxy)-L-threonine + NAD(+) = 3-amino-2-oxopropyl phosphate + CO2 + NADH. It participates in cofactor biosynthesis; pyridoxine 5'-phosphate biosynthesis; pyridoxine 5'-phosphate from D-erythrose 4-phosphate: step 4/5. In terms of biological role, catalyzes the NAD(P)-dependent oxidation of 4-(phosphooxy)-L-threonine (HTP) into 2-amino-3-oxo-4-(phosphooxy)butyric acid which spontaneously decarboxylates to form 3-amino-2-oxopropyl phosphate (AHAP). In Desulfosudis oleivorans (strain DSM 6200 / JCM 39069 / Hxd3) (Desulfococcus oleovorans), this protein is 4-hydroxythreonine-4-phosphate dehydrogenase.